A 218-amino-acid chain; its full sequence is Putative NAD(P)H nitroreductase SH0546 (218 aa).

The protein belongs to the nitroreductase family. It depends on FMN as a cofactor.

This is Putative NAD(P)H nitroreductase SH0546 from Staphylococcus haemolyticus (strain JCSC1435).